Reading from the N-terminus, the 376-residue chain is Flap endonuclease 1 (376 aa).

The segment at 1–105 is N-domain; sequence MGIKGLSKLL…GELNKRKENA (105 aa). Mg(2+) is bound at residue D34. Residues R47 and R71 each coordinate DNA. Mg(2+) is bound by residues D87, E159, E161, D180, and D182. Residues 123-254 form an I-domain region; the sequence is QAKKLMKRTA…ITAFELIQQY (132 aa). A DNA-binding site is contributed by E159. G232 and D234 together coordinate DNA. D234 serves as a coordination point for Mg(2+). The tract at residues 336 to 344 is interaction with PCNA; it reads AQGRLDSFF. A disordered region spans residues 352–376; that stretch reads SKSEAASGVKRKKPTTKAKESRKKK. A compositionally biased stretch (basic residues) spans 360–376; sequence VKRKKPTTKAKESRKKK.

Belongs to the XPG/RAD2 endonuclease family. FEN1 subfamily. In terms of assembly, interacts with PCNA. Three molecules of FEN1 bind to one PCNA trimer with each molecule binding to one PCNA monomer. PCNA stimulates the nuclease activity without altering cleavage specificity. Mg(2+) serves as cofactor. In terms of processing, phosphorylated. Phosphorylation upon DNA damage induces relocalization to the nuclear plasma.

The protein resides in the nucleus. It localises to the nucleolus. The protein localises to the nucleoplasm. Its subcellular location is the mitochondrion. In terms of biological role, structure-specific nuclease with 5'-flap endonuclease and 5'-3' exonuclease activities involved in DNA replication and repair. During DNA replication, cleaves the 5'-overhanging flap structure that is generated by displacement synthesis when DNA polymerase encounters the 5'-end of a downstream Okazaki fragment. It enters the flap from the 5'-end and then tracks to cleave the flap base, leaving a nick for ligation. Also involved in the long patch base excision repair (LP-BER) pathway, by cleaving within the apurinic/apyrimidinic (AP) site-terminated flap. Acts as a genome stabilization factor that prevents flaps from equilibrating into structures that lead to duplications and deletions. Also possesses 5'-3' exonuclease activity on nicked or gapped double-stranded DNA, and exhibits RNase H activity. Also involved in replication and repair of rDNA and in repairing mitochondrial DNA. This is Flap endonuclease 1 from Entamoeba dispar (strain ATCC PRA-260 / SAW760).